We begin with the raw amino-acid sequence, 401 residues long: Protein IQ-DOMAIN 24 (401 aa).

Residues 1-48 (MGFFGRLFGSKKQEKATPNRRRWSFATRSSHPENDSSSHSSKRRGDED) are disordered. Positions 105 to 121 (EYKAAMKIQSAFRGYLA) are calmodulin-binding. IQ domains lie at 105–133 (EYKA…ALVK) and 134–156 (LQAL…RMQT). 2 stretches are compositionally biased toward low complexity: residues 165–176 (RASRSSHVSDSS) and 278–287 (RSRTGSSSGG). Disordered regions lie at residues 165–186 (RASR…IPSS) and 258–296 (SPRK…PFTP).

Belongs to the IQD family. Binds to multiple calmodulin (CaM) in the presence of Ca(2+) and CaM-like proteins.

Its subcellular location is the nucleus. It is found in the nuclear body. It localises to the cell membrane. In terms of biological role, may be involved in cooperative interactions with calmodulins or calmodulin-like proteins. Recruits calmodulin proteins to microtubules, thus being a potential scaffold in cellular signaling and trafficking. May associate with nucleic acids and regulate gene expression at the transcriptional or post-transcriptional level. This chain is Protein IQ-DOMAIN 24, found in Arabidopsis thaliana (Mouse-ear cress).